We begin with the raw amino-acid sequence, 320 residues long: Protein LATERAL ROOT PRIMORDIUM 1 (320 aa).

Positions 90 to 110 are disordered; that stretch reads QTTVGTSSNNSGSGSGASGTA. The Zn(2+) site is built by Cys-112, Cys-115, Cys-123, Cys-128, Cys-132, and Cys-139. Residues 112-139 constitute a DNA-binding region (zn(2)-C6 fungal-type; degenerate); it reads CQDCGNQAKKECKQRRCRTCCKSRGFDC. Residues 150–223 are disordered; sequence AARRRERQVM…QDGGGSREAW (74 aa). The span at 168 to 177 shows a compositional bias: low complexity; sequence GSSLSTSSGT. The span at 193–214 shows a compositional bias: polar residues; that stretch reads ATSHTSTSNTPPQSFETSSSRQ. A Required for homo- and heterodimerization motif is present at residues 256–259; it reads IGGH.

Belongs to the SHI protein family. Homodimer. In terms of tissue distribution, restricted to lateral root primordia.

Its subcellular location is the nucleus. Its function is as follows. Transcription activator that binds DNA on 5'-ACTCTAC-3' and promotes auxin homeostasis-regulating gene expression (e.g. YUC genes), as well as genes affecting stamen development, cell expansion and timing of flowering. Synergistically with other SHI-related proteins, regulates gynoecium, stamen and leaf development in a dose-dependent manner, controlling apical-basal patterning. Promotes style and stigma formation, and influence vascular development during gynoecium development. May also have a role in the formation and/or maintenance of the shoot apical meristem (SAM). Modulates root growth. The polypeptide is Protein LATERAL ROOT PRIMORDIUM 1 (LRP1) (Arabidopsis thaliana (Mouse-ear cress)).